A 55-amino-acid polypeptide reads, in one-letter code: AHMDCTEFNPLCRCNKMLGDLICAVIGDAKEEHRNMCALCCEHPGGFEYSNGPCE.

The region spanning 1–55 (AHMDCTEFNPLCRCNKMLGDLICAVIGDAKEEHRNMCALCCEHPGGFEYSNGPCE) is the Kazal-like domain. Disulfide bonds link cysteine 5–cysteine 40, cysteine 12–cysteine 41, cysteine 14–cysteine 37, and cysteine 23–cysteine 54.

Its subcellular location is the secreted. In terms of biological role, potent inhibitor of trypsin. The chain is Trypsin inhibitor from Halocynthia roretzi (Sea squirt).